The primary structure comprises 154 residues: MKLLSKIMIIALAASMLQACNSPGGMNKQGTGTLLGGAGGALLGSQFGKGKGQLVGVGVGALLGAVLGGQIGAGMDEQDRRLAELTSQRALETAPSGSNVEWRNPDNGNYGYVTPNKTYRNSNGQYCREYTQTVVIGGKQQKAYGNACRQPDGQ.

The first 19 residues, 1–19 (MKLLSKIMIIALAASMLQA), serve as a signal peptide directing secretion. Residue Cys-20 is the site of N-palmitoyl cysteine attachment. Cys-20 carries S-diacylglycerol cysteine lipidation.

It belongs to the rickettsiale 17 kDa surface antigen family.

The protein localises to the cell outer membrane. The polypeptide is 17 kDa surface antigen (omp) (Rickettsia australis).